A 171-amino-acid chain; its full sequence is Photosystem I assembly protein Ycf3 (171 aa).

TPR repeat units follow at residues 35–68 (AFTY…EIDP), 72–105 (SYIL…NPSL), and 120–153 (GEQA…APNN).

This sequence belongs to the Ycf3 family.

The protein localises to the plastid. Its subcellular location is the chloroplast thylakoid membrane. In terms of biological role, essential for the assembly of the photosystem I (PSI) complex. May act as a chaperone-like factor to guide the assembly of the PSI subunits. In Psilotum nudum (Whisk fern), this protein is Photosystem I assembly protein Ycf3.